The following is a 101-amino-acid chain: Small ubiquitin-related modifier 1 (101 aa).

The 78-residue stretch at 20–97 folds into the Ubiquitin-like domain; sequence EYIKLKVIGQ…IEVYQEQTGG (78 aa). Residue Gly97 forms a Glycyl lysine isopeptide (Gly-Lys) (interchain with K-? in acceptor proteins) linkage. A propeptide spanning residues 98 to 101 is cleaved from the precursor; sequence HSTV.

The protein belongs to the ubiquitin family. SUMO subfamily. In terms of assembly, interacts with SAE2, UBE2I, RANBP2, PIAS1 and PIAS2. Covalently attached to a number of proteins. In terms of processing, cleavage of precursor form by a sentrin-specific protease is necessary for function.

Its subcellular location is the nucleus membrane. It is found in the nucleus speckle. It localises to the cytoplasm. The protein resides in the nucleus. The protein localises to the PML body. Its subcellular location is the cell membrane. Functionally, ubiquitin-like protein that can be covalently attached to proteins as a monomer or a lysine-linked polymer. Covalent attachment via an isopeptide bond to its substrates requires prior activation by the E1 complex SAE1-SAE2 and linkage to the E2 enzyme UBE2I. This post-translational modification on lysine residues of proteins plays a crucial role in a number of cellular processes such as nuclear transport, DNA replication and repair, mitosis and signal transduction. Polymeric SUMO1 chains are also susceptible to polyubiquitination which functions as a signal for proteasomal degradation of modified proteins. This Gallus gallus (Chicken) protein is Small ubiquitin-related modifier 1 (SUMO1).